The primary structure comprises 111 residues: Large ribosomal subunit protein uL22 (111 aa).

The protein belongs to the universal ribosomal protein uL22 family. Part of the 50S ribosomal subunit.

Its function is as follows. This protein binds specifically to 23S rRNA; its binding is stimulated by other ribosomal proteins, e.g. L4, L17, and L20. It is important during the early stages of 50S assembly. It makes multiple contacts with different domains of the 23S rRNA in the assembled 50S subunit and ribosome. Functionally, the globular domain of the protein is located near the polypeptide exit tunnel on the outside of the subunit, while an extended beta-hairpin is found that lines the wall of the exit tunnel in the center of the 70S ribosome. This is Large ribosomal subunit protein uL22 from Xylella fastidiosa (strain 9a5c).